The following is a 406-amino-acid chain: MSFKSLIQDMRGELGSISRKGFDVRFGYGRSRSQRVVQDTSVPVDAFKQSCWASMPPELLRDVLMRIEQSEDTWPSRKNVVSCAGVCRNWREIVKEIVRVPELSSKLTFPISLKQPGPRGSLVQCYIMRNRSNQTYYLYLGLNQAASNDDGKFLLAAKRFRRPTCTDYIISLNCDDVSRGSNTYIGKLRSNFLGTKFTVYDAQPTNPGTQVTRTRSSRLLSLKQVSPRIPSGNYPVAHISYELNVLGSRGPRRMQCVMDAIPASAVEPGGTAPTQTELVHSNLDSFPSFSFFRSKSIRAESLPSGPSSAAQKEGLLVLKNKAPRWHEQLQCWCLNFNGRVTVASVKNFQLVAAPENGPAGPEHENVILQFGKVGKDVFTMDYQYPISAFQAFTICLSSFDTKIACE.

An F-box domain is found at 50–105 (SCWASMPPELLRDVLMRIEQSEDTWPSRKNVVSCAGVCRNWREIVKEIVRVPELSS).

This sequence belongs to the TUB family. As to expression, ubiquitous at low levels. Not detected in mature siliques.

The protein localises to the cell membrane. The protein resides in the plastid. It is found in the nucleus. Its subcellular location is the nucleoplasm. It localises to the cytoplasm. Functionally, involved in abiotic stress signaling. Tethered to plasma membrane (PM) and probably bound to phosphatidylinositol 4,5-bisphosphate. Abiotic stresses (drought, salt, H(2)O(2)) trigger phospholipase C mediated PM dislogement and plastidial and nucleocytosolic relocation of TULP3. The protein is Tubby-like F-box protein 3 of Arabidopsis thaliana (Mouse-ear cress).